The following is a 215-amino-acid chain: MPLPSKEELKEAIVKAVQYSPKRNFKQSVELIVVLKDVDPRSPEGRIRETIFLPKGLGKDKIICVVADGEMAEKARAGGAHRVITRDELLALSKKDAKKVAQECDWVLVRTDLMANAGRILGPALGPRGKIPVPVPPAADIVSVMNRYKSAILLRNKDQPQLMTRIGTEDMNPEDLVINAQTILSRLETKLPNGAHNIAKIVVKTTMGPPIEVMG.

It belongs to the universal ribosomal protein uL1 family. In terms of assembly, part of the 50S ribosomal subunit.

Its function is as follows. Binds directly to 23S rRNA. Probably involved in E site tRNA release. Protein L1 is also a translational repressor protein, it controls the translation of its operon by binding to its mRNA. This Staphylothermus marinus (strain ATCC 43588 / DSM 3639 / JCM 9404 / F1) protein is Large ribosomal subunit protein uL1.